A 363-amino-acid polypeptide reads, in one-letter code: Aminomethyltransferase (363 aa).

It belongs to the GcvT family. As to quaternary structure, the glycine cleavage system is composed of four proteins: P, T, L and H.

The enzyme catalyses N(6)-[(R)-S(8)-aminomethyldihydrolipoyl]-L-lysyl-[protein] + (6S)-5,6,7,8-tetrahydrofolate = N(6)-[(R)-dihydrolipoyl]-L-lysyl-[protein] + (6R)-5,10-methylene-5,6,7,8-tetrahydrofolate + NH4(+). Its function is as follows. The glycine cleavage system catalyzes the degradation of glycine. This Staphylococcus epidermidis (strain ATCC 35984 / DSM 28319 / BCRC 17069 / CCUG 31568 / BM 3577 / RP62A) protein is Aminomethyltransferase.